The following is a 145-amino-acid chain: Allergen MAG29 (145 aa).

Disordered regions lie at residues 1–21 and 103–145; these read KDDI…DDKQ and AGGA…EEVD. Gly residues predominate over residues 104–137; the sequence is GGAGAGGMPGGFPGGFPGTDGSGGGAAGGDGGKS.

It belongs to the heat shock protein 70 family.

The chain is Allergen MAG29 (MAG29) from Dermatophagoides farinae (American house dust mite).